Reading from the N-terminus, the 215-residue chain is 3-demethoxyubiquinol 3-hydroxylase (215 aa).

Fe cation contacts are provided by E64, E94, H97, E146, E178, and H181.

This sequence belongs to the COQ7 family. Requires Fe cation as cofactor.

It is found in the cell membrane. The catalysed reaction is a 5-methoxy-2-methyl-3-(all-trans-polyprenyl)benzene-1,4-diol + AH2 + O2 = a 3-demethylubiquinol + A + H2O. It participates in cofactor biosynthesis; ubiquinone biosynthesis. Functionally, catalyzes the hydroxylation of 2-nonaprenyl-3-methyl-6-methoxy-1,4-benzoquinol during ubiquinone biosynthesis. The polypeptide is 3-demethoxyubiquinol 3-hydroxylase (Pseudomonas fluorescens (strain SBW25)).